The primary structure comprises 231 residues: ATP phosphoribosyltransferase (231 aa).

Belongs to the ATP phosphoribosyltransferase family. Short subfamily. In terms of assembly, heteromultimer composed of HisG and HisZ subunits.

The protein localises to the cytoplasm. The enzyme catalyses 1-(5-phospho-beta-D-ribosyl)-ATP + diphosphate = 5-phospho-alpha-D-ribose 1-diphosphate + ATP. It functions in the pathway amino-acid biosynthesis; L-histidine biosynthesis; L-histidine from 5-phospho-alpha-D-ribose 1-diphosphate: step 1/9. In terms of biological role, catalyzes the condensation of ATP and 5-phosphoribose 1-diphosphate to form N'-(5'-phosphoribosyl)-ATP (PR-ATP). Has a crucial role in the pathway because the rate of histidine biosynthesis seems to be controlled primarily by regulation of HisG enzymatic activity. The polypeptide is ATP phosphoribosyltransferase (hisG) (Rhizobium etli (strain CIAT 652)).